The primary structure comprises 469 residues: MNKGRVTQIMGPVVDVKFDGGKLPEIYNALTVKQSNENGTSINLTFEVALHLGDDTVRTVAMSSTDGLVRGTEVEDTGKAISVPVGDATLGRVFNVLGDAIDLDGEVPADVRRDPIHRQAPAFEELSTKVEILETGIKVVDLLAPYIKGGKIGLFGGAGVGKTVLIQELINNIAQEHGGISVFAGVGERTREGNDLYHEMSDSGVIKKTAMVFGQMNEPPGARQRVALTGLTMAEHFRDEQGQDVLLFIDNIFRFTQAGSEVSALLGRMPSAVGYQPTLATEMGQLQERITSTNKGSITSIQAVYVPADDYTDPAPATTFAHLDATTNLERRLTQMGIYPAVDPLASTSRALSPEIVGEEHYEVARQVQQTLQRYKELQDIIAILGMDELSEEDKLVVHRARRIQFFLSQNFHVAEQFTGQKGSYVPVKDTVRGFKEILEGKYDDLPEDAFRLVGGIEEVIENAKKMMA.

156-163 is an ATP binding site; sequence GGAGVGKT.

It belongs to the ATPase alpha/beta chains family. In terms of assembly, F-type ATPases have 2 components, CF(1) - the catalytic core - and CF(0) - the membrane proton channel. CF(1) has five subunits: alpha(3), beta(3), gamma(1), delta(1), epsilon(1). CF(0) has three main subunits: a(1), b(2) and c(9-12). The alpha and beta chains form an alternating ring which encloses part of the gamma chain. CF(1) is attached to CF(0) by a central stalk formed by the gamma and epsilon chains, while a peripheral stalk is formed by the delta and b chains.

It is found in the cell membrane. The enzyme catalyses ATP + H2O + 4 H(+)(in) = ADP + phosphate + 5 H(+)(out). Produces ATP from ADP in the presence of a proton gradient across the membrane. The catalytic sites are hosted primarily by the beta subunits. In Bacillus cereus (strain AH820), this protein is ATP synthase subunit beta.